Consider the following 335-residue polypeptide: Dihydroorotate dehydrogenase (quinone) (335 aa).

Residues 59 to 63 (AGLDK) and threonine 83 contribute to the FMN site. Lysine 63 is a binding site for substrate. 108 to 112 (NRMGF) is a binding site for substrate. Asparagine 136 and asparagine 169 together coordinate FMN. Asparagine 169 provides a ligand contact to substrate. Serine 172 (nucleophile) is an active-site residue. Asparagine 174 contacts substrate. Residues lysine 214 and threonine 242 each coordinate FMN. 243-244 (NT) contacts substrate. FMN-binding positions include glycine 265, glycine 294, and 315–316 (YS).

It belongs to the dihydroorotate dehydrogenase family. Type 2 subfamily. In terms of assembly, monomer. Requires FMN as cofactor.

The protein localises to the cell membrane. It catalyses the reaction (S)-dihydroorotate + a quinone = orotate + a quinol. Its pathway is pyrimidine metabolism; UMP biosynthesis via de novo pathway; orotate from (S)-dihydroorotate (quinone route): step 1/1. In terms of biological role, catalyzes the conversion of dihydroorotate to orotate with quinone as electron acceptor. This is Dihydroorotate dehydrogenase (quinone) from Neisseria meningitidis serogroup B (strain ATCC BAA-335 / MC58).